Consider the following 138-residue polypeptide: Holo-[acyl-carrier-protein] synthase (138 aa).

Aspartate 8 and glutamate 60 together coordinate Mg(2+).

Belongs to the P-Pant transferase superfamily. AcpS family. The cofactor is Mg(2+).

It localises to the cytoplasm. It catalyses the reaction apo-[ACP] + CoA = holo-[ACP] + adenosine 3',5'-bisphosphate + H(+). Transfers the 4'-phosphopantetheine moiety from coenzyme A to a Ser of acyl-carrier-protein. This is Holo-[acyl-carrier-protein] synthase from Magnetococcus marinus (strain ATCC BAA-1437 / JCM 17883 / MC-1).